The sequence spans 138 residues: Low molecular weight protein-tyrosine-phosphatase PtpB (138 aa).

The active-site Nucleophile is cysteine 7. Residue arginine 13 is part of the active site. Aspartate 111 acts as the Proton donor in catalysis.

The protein belongs to the low molecular weight phosphotyrosine protein phosphatase family.

It carries out the reaction O-phospho-L-tyrosyl-[protein] + H2O = L-tyrosyl-[protein] + phosphate. In terms of biological role, dephosphorylates the phosphotyrosine-containing proteins. The protein is Low molecular weight protein-tyrosine-phosphatase PtpB (ptpB) of Staphylococcus haemolyticus (strain JCSC1435).